A 264-amino-acid polypeptide reads, in one-letter code: Ion-translocating oxidoreductase complex subunit B (264 aa).

A helical transmembrane segment spans residues 5–25; it reads LINSIAVLAGLGFAVGVMLVI. A 4Fe-4S domain is found at 33–92; sequence DSNPLIDDVASLLPGANCGGCGFAGCAACAEAIVEQGAPVNSCPVGGFEVAKQIGALLGQ. Residues C50, C53, C58, C75, C138, C142, C148, C152, C172, C175, C178, C182, C217, C220, C223, C227, C246, C249, C252, and C256 each coordinate [4Fe-4S] cluster. 4Fe-4S ferredoxin-type domains lie at 127-162, 163-192, 207-236, and 237-264; these read VALMLCDSRKGCTYGCLGLGTCVQACQFGALSMGED, GFPVVNKALCTSCGNCIAACPNGVLTFARD, KDVKAVCEVGCIGCKKCEKECPAGAIRVTE, and FLAEIDQEKCTACGACVAICPQKAIELR.

Belongs to the 4Fe4S bacterial-type ferredoxin family. RnfB subfamily. In terms of assembly, the Rnf complex is probably composed of eight subunits, including RnfA, RnfB, RnfC, RnfD, RnfE and RnfG. [4Fe-4S] cluster serves as cofactor.

Its subcellular location is the cell membrane. Its function is as follows. Part of a membrane-bound complex that couples electron transfer with translocation of ions across the membrane. Catalyzes Na(+) transport, most probably coupled to electron transfer from reduced ferredoxin to methanophenazine and heterodisulfide reductase. Involved in heterodisulfide reduction during methanogenesis from acetate. The protein is Ion-translocating oxidoreductase complex subunit B of Methanosarcina acetivorans (strain ATCC 35395 / DSM 2834 / JCM 12185 / C2A).